The following is a 447-amino-acid chain: Signal recognition particle 54 kDa protein (447 aa).

GTP contacts are provided by residues G103–T110, D185–R189, and T245–D248.

This sequence belongs to the GTP-binding SRP family. SRP54 subfamily. As to quaternary structure, part of the signal recognition particle protein translocation system, which is composed of SRP and FtsY. Archaeal SRP consists of a 7S RNA molecule of 300 nucleotides and two protein subunits: SRP54 and SRP19.

The protein resides in the cytoplasm. The enzyme catalyses GTP + H2O = GDP + phosphate + H(+). Functionally, involved in targeting and insertion of nascent membrane proteins into the cytoplasmic membrane. Binds to the hydrophobic signal sequence of the ribosome-nascent chain (RNC) as it emerges from the ribosomes. The SRP-RNC complex is then targeted to the cytoplasmic membrane where it interacts with the SRP receptor FtsY. The polypeptide is Signal recognition particle 54 kDa protein (Saccharolobus islandicus (strain L.S.2.15 / Lassen #1) (Sulfolobus islandicus)).